The sequence spans 474 residues: ATP synthase subunit beta (474 aa).

151–158 (GGAGVGKT) provides a ligand contact to ATP.

It belongs to the ATPase alpha/beta chains family. F-type ATPases have 2 components, CF(1) - the catalytic core - and CF(0) - the membrane proton channel. CF(1) has five subunits: alpha(3), beta(3), gamma(1), delta(1), epsilon(1). CF(0) has four main subunits: a(1), b(1), b'(1) and c(9-12).

The protein localises to the cell inner membrane. The enzyme catalyses ATP + H2O + 4 H(+)(in) = ADP + phosphate + 5 H(+)(out). Produces ATP from ADP in the presence of a proton gradient across the membrane. The catalytic sites are hosted primarily by the beta subunits. The chain is ATP synthase subunit beta from Roseobacter denitrificans (strain ATCC 33942 / OCh 114) (Erythrobacter sp. (strain OCh 114)).